The following is a 942-amino-acid chain: Leucine--tRNA ligase 1 (942 aa).

Residues 39–49 carry the 'HIGH' region motif; sequence PYTNSPLHIGH. The 'KMSKS' region signature appears at 624-628; that stretch reads KMSKS. Lys-627 contributes to the ATP binding site.

This sequence belongs to the class-I aminoacyl-tRNA synthetase family.

The protein resides in the cytoplasm. It catalyses the reaction tRNA(Leu) + L-leucine + ATP = L-leucyl-tRNA(Leu) + AMP + diphosphate. The polypeptide is Leucine--tRNA ligase 1 (Sulfolobus acidocaldarius (strain ATCC 33909 / DSM 639 / JCM 8929 / NBRC 15157 / NCIMB 11770)).